The sequence spans 362 residues: 5'-tyrosyl-DNA phosphodiesterase (362 aa).

Acidic residues predominate over residues 1–10 (MSNSDDEIQE). Residues 1–43 (MSNSDDEIQEIEAKRQKMSQEDSEVEIEILDEPEQGKLKNSSM) are disordered. Basic and acidic residues predominate over residues 11 to 20 (IEAKRQKMSQ). A compositionally biased stretch (acidic residues) spans 21-33 (EDSEVEIEILDEP). The interaction with 5' end of substrate DNA stretch occupies residues 126-130 (NIDGL). Positions 128 and 158 each coordinate Mg(2+). Residues 232-237 (HLESTR) form an interaction with 5' end of substrate DNA region. Aspartate 271 serves as the catalytic Proton donor/acceptor. The interaction with 5' end of substrate DNA stretch occupies residues 273–275 (NLR).

This sequence belongs to the CCR4/nocturin family. TTRAP/TDP2 subfamily. As to quaternary structure, interacts with mxl-1; the interaction promotes axon regeneration after injury. Interacts with ets-4; the interaction is required for the sumoylation of ets-4. Requires Mg(2+) as cofactor. It depends on Mn(2+) as a cofactor.

It localises to the nucleus. The protein resides in the PML body. DNA repair enzyme that can remove a variety of covalent adducts from DNA through hydrolysis of a 5'-phosphodiester bond, giving rise to DNA with a free 5' phosphate. Catalyzes the hydrolysis of dead-end complexes between DNA and the topoisomerase 2 (top2) active site tyrosine residue. Hydrolyzes 5'-phosphoglycolates on protruding 5' ends on DNA double-strand breaks (DSBs) due to DNA damage by radiation and free radicals. Inhibits axon regeneration after neuronal injury by promoting the sumoylation of ets-4, thereby inhibiting the phosphorylation of ets-4 required for probable interaction with cebp-1 and activation of svh-2 expression. The polypeptide is 5'-tyrosyl-DNA phosphodiesterase (Caenorhabditis elegans).